Reading from the N-terminus, the 433-residue chain is ATP-dependent protease ATPase subunit HslU (433 aa).

ATP is bound by residues Val18, 60 to 65, Asp246, Glu311, and Arg383; that span reads GVGKTE.

This sequence belongs to the ClpX chaperone family. HslU subfamily. As to quaternary structure, a double ring-shaped homohexamer of HslV is capped on each side by a ring-shaped HslU homohexamer. The assembly of the HslU/HslV complex is dependent on binding of ATP.

The protein localises to the cytoplasm. ATPase subunit of a proteasome-like degradation complex; this subunit has chaperone activity. The binding of ATP and its subsequent hydrolysis by HslU are essential for unfolding of protein substrates subsequently hydrolyzed by HslV. HslU recognizes the N-terminal part of its protein substrates and unfolds these before they are guided to HslV for hydrolysis. This Nitrobacter winogradskyi (strain ATCC 25391 / DSM 10237 / CIP 104748 / NCIMB 11846 / Nb-255) protein is ATP-dependent protease ATPase subunit HslU.